A 150-amino-acid chain; its full sequence is Arginine repressor (150 aa).

This sequence belongs to the ArgR family.

Its subcellular location is the cytoplasm. It participates in amino-acid biosynthesis; L-arginine biosynthesis [regulation]. In terms of biological role, regulates arginine biosynthesis genes. This chain is Arginine repressor, found in Clostridium botulinum (strain Loch Maree / Type A3).